The following is a 483-amino-acid chain: ATP synthase subunit beta (483 aa).

169–176 (GGAGVGKT) is an ATP binding site.

The protein belongs to the ATPase alpha/beta chains family. In terms of assembly, F-type ATPases have 2 components, CF(1) - the catalytic core - and CF(0) - the membrane proton channel. CF(1) has five subunits: alpha(3), beta(3), gamma(1), delta(1), epsilon(1). CF(0) has three main subunits: a(1), b(2) and c(9-12). The alpha and beta chains form an alternating ring which encloses part of the gamma chain. CF(1) is attached to CF(0) by a central stalk formed by the gamma and epsilon chains, while a peripheral stalk is formed by the delta and b chains.

It is found in the cell membrane. The catalysed reaction is ATP + H2O + 4 H(+)(in) = ADP + phosphate + 5 H(+)(out). Produces ATP from ADP in the presence of a proton gradient across the membrane. The catalytic sites are hosted primarily by the beta subunits. The sequence is that of ATP synthase subunit beta from Rhodococcus opacus (strain B4).